A 142-amino-acid chain; its full sequence is Protein spalt-accessory (142 aa).

The N-terminal stretch at 1-16 (MKLLIALFVLVNAVIA) is a signal peptide. The span at 65 to 77 (GQGGVSPGQGGFA) shows a compositional bias: gly residues. A disordered region spans residues 65–142 (GQGGVSPGQG…HHEHHGHHRH (78 aa)). The segment covering 112–124 (NHHEYPEHHGDHH) has biased composition (basic and acidic residues). Positions 125–142 (REHHEHHGHHEHHGHHRH) are enriched in basic residues.

The protein localises to the secreted. Likely to be involved in the establishment of the head. This is Protein spalt-accessory (sala) from Drosophila orena (Fruit fly).